Reading from the N-terminus, the 655-residue chain is p-hydroxybenzoic acid efflux pump subunit AaeB (655 aa).

Residues 1-12 (MGIFSIANQHIR) are Periplasmic-facing. Residues 13–33 (FAVKLACAIVLALFIGFHFQL) form a helical membrane-spanning segment. Residues 34-37 (ETPR) are Cytoplasmic-facing. Residues 38–58 (WAVLTAAIVAAGPAFAAGGEP) form a helical membrane-spanning segment. The Periplasmic segment spans residues 59–68 (YSGAIRYRGM). The chain crosses the membrane as a helical span at residues 69–89 (LRIIGTFIGCIAALIIIISMI). Over 90-92 (RAP) the chain is Cytoplasmic. The helical transmembrane segment at 93-113 (LLMILVCCVWVGFCTWISSLV) threads the bilayer. The Periplasmic segment spans residues 114 to 120 (RIENSYA). Residues 121-141 (WGLSGYTALIIVITIQTEPLL) form a helical membrane-spanning segment. At 142-151 (TPQFALERCS) the chain is on the cytoplasmic side. The chain crosses the membrane as a helical span at residues 152–172 (EIVIGIGCAILADLLFSPRSI). Topologically, residues 173–369 (KQEVDRELDS…RTTLSCILGT (197 aa)) are periplasmic. The helical transmembrane segment at 370-390 (LFWLWTGWTSGNGEMVMIAVV) threads the bilayer. Over 391-406 (TSLAMRLPNPRMVCID) the chain is Cytoplasmic. Residues 407–427 (FIYGTLAALPLGLLYFLVIIP) form a helical membrane-spanning segment. Over 428–430 (NTQ) the chain is Periplasmic. The chain crosses the membrane as a helical span at residues 431-451 (QSMLLLCLSLAVLGFFIGIEV). The Cytoplasmic segment spans residues 452–458 (QKRRLGS). Residues 459 to 479 (MGALASTINIIVLDNPMTFHF) form a helical membrane-spanning segment. At 480-481 (SQ) the chain is on the periplasmic side. The chain crosses the membrane as a helical span at residues 482–502 (FLDSALGQIVGCMLAFIVILL). The Cytoplasmic segment spans residues 503 to 655 (VRDKSKDRTG…HKYQNALTDS (153 aa)).

Belongs to the aromatic acid exporter ArAE (TC 2.A.85) family.

Its subcellular location is the cell inner membrane. Functionally, forms an efflux pump with AaeA. Could function as a metabolic relief valve, allowing to eliminate certain compounds when they accumulate to high levels in the cell. This is p-hydroxybenzoic acid efflux pump subunit AaeB from Salmonella paratyphi A (strain ATCC 9150 / SARB42).